The following is a 158-amino-acid chain: Transcription elongation factor GreA (158 aa).

This sequence belongs to the GreA/GreB family.

Functionally, necessary for efficient RNA polymerase transcription elongation past template-encoded arresting sites. The arresting sites in DNA have the property of trapping a certain fraction of elongating RNA polymerases that pass through, resulting in locked ternary complexes. Cleavage of the nascent transcript by cleavage factors such as GreA or GreB allows the resumption of elongation from the new 3'terminus. GreA releases sequences of 2 to 3 nucleotides. This Psychrobacter arcticus (strain DSM 17307 / VKM B-2377 / 273-4) protein is Transcription elongation factor GreA.